The chain runs to 184 residues: uncharacterized protein (184 aa).

A helical transmembrane segment spans residues 35–55 (LSFLIYILYTFSISGLSTFVI).

It localises to the membrane. This is an uncharacterized protein from Schizosaccharomyces pombe (strain 972 / ATCC 24843) (Fission yeast).